We begin with the raw amino-acid sequence, 460 residues long: MDQSSRYANLNLKEKDLIAGGRHVLCAYIVKPKAGFGDFLQTAAHFAAESSTGTNVEVSTTDDFTRGVDALVYEIDESKELMKIAYPVELFDRNVIDGRAMIASFLTLTIGNNQGMGDVEYAKMYDFYVPPAYLKLFDGPSTTIKDLWRVLGRPVVDGGFIVGTIIKPKLGLRPQPFANACFDFWLGGDFIKNDEPQGNQVFAPFKETVRAVNEAMRRAQDATGQAKLFSFNITADDHYEMLARGEYILETFGENADHIAFLVDGYVAGPAAVTTARRAFPKQYLHYHRAGHGAVTSPQSKRGYTAFVLSKMARLQGASGIHTGTMGFGKMEGEAADRAMAFMITEDSADGPYFHQEWLGMNPTTPIISGGMNALRMPGFFTNLGHSNLIMTAGGGAFGHLDGGAAGAKSLRQAEQCWKLGADPVQFAKEHHEFARAFESFSHDADKLFPGWRGQLGLAA.

A substrate-binding site is contributed by Asn-112. Lys-167 functions as the Proton acceptor in the catalytic mechanism. Lys-169 provides a ligand contact to substrate. Positions 192, 194, and 195 each coordinate Mg(2+). At Lys-192 the chain carries N6-carboxylysine. The active-site Proton acceptor is His-288. Substrate contacts are provided by Arg-289, His-322, and Ser-369.

The protein belongs to the RuBisCO large chain family. Type II subfamily. In terms of assembly, homodimer. The cofactor is Mg(2+).

The catalysed reaction is 2 (2R)-3-phosphoglycerate + 2 H(+) = D-ribulose 1,5-bisphosphate + CO2 + H2O. It carries out the reaction D-ribulose 1,5-bisphosphate + O2 = 2-phosphoglycolate + (2R)-3-phosphoglycerate + 2 H(+). In terms of biological role, ruBisCO catalyzes two reactions: the carboxylation of D-ribulose 1,5-bisphosphate, the primary event in carbon dioxide fixation, as well as the oxidative fragmentation of the pentose substrate. Both reactions occur simultaneously and in competition at the same active site. In Rhodopseudomonas palustris (strain BisA53), this protein is Ribulose bisphosphate carboxylase.